Here is a 375-residue protein sequence, read N- to C-terminus: MPRCPSPSHAIIDLSAIAANLAVVRKRAGDRKVLFAVKADAYGHGAVEVSRYVEKHRYADWLAVATVAEGQELVEAGITLPILKLSPADPWDMDAAITSGIRLTVVDFDTLEAVSKAAVRLGITAKIHIAVDSGMGRIGLRPECLAELTAAADRAKGVEVEGVFTHLPISDVPEGAEFTRREIDTFMTAVSLIETHRGPFPLVHLANSGAILGHDLGKTSMVRAGIVGYGYDPNPHADRADLHPALSWISHVTFVKTVSVGDTIGYGRTWTASETTKIATVPVGYADGLSRGLSNKGHVLIRGSVHPIVGRICMDQFMVDLGPDSNVTVGDEVVLIGTQEDETLTADDMAELLGTISYEITCAISKRVDRYWVGQ.

Catalysis depends on lysine 38, which acts as the Proton acceptor; specific for D-alanine. Lysine 38 carries the N6-(pyridoxal phosphate)lysine modification. Arginine 137 provides a ligand contact to substrate. The active-site Proton acceptor; specific for L-alanine is the tyrosine 266. Substrate is bound at residue methionine 314.

It belongs to the alanine racemase family. Requires pyridoxal 5'-phosphate as cofactor.

It carries out the reaction L-alanine = D-alanine. Its pathway is amino-acid biosynthesis; D-alanine biosynthesis; D-alanine from L-alanine: step 1/1. Functionally, catalyzes the interconversion of L-alanine and D-alanine. May also act on other amino acids. The chain is Alanine racemase (alr) from Cutibacterium acnes (strain DSM 16379 / KPA171202) (Propionibacterium acnes).